Here is a 589-residue protein sequence, read N- to C-terminus: PTS system mannitol-specific EIICB component (589 aa).

Residues 1-25 (MERKSSLKVRVQKLGTSLSNMVMPN) lie on the Cytoplasmic side of the membrane. The PTS EIIC type-2 domain maps to 14–347 (LGTSLSNMVM…ILKSDNSDDD (334 aa)). The helical transmembrane segment at 26–47 (IGAFIAWGVAASLFIATGYLPN) threads the bilayer. Residues 48–51 (KALD) are Extracellular-facing. A helical membrane pass occupies residues 52–73 (TNVVGPMLKYVLPLLIGYTGGY). The Cytoplasmic segment spans residues 74 to 136 (NIHKQRGGVI…TGFEMLVNNF (63 aa)). The chain crosses the membrane as a helical span at residues 137 to 158 (SLGLIGFALMVLAFFVIGPVVA). At 159–167 (QLTEWVGIG) the chain is on the extracellular side. Residues 168 to 188 (VEAIVKVHLLPLANLIIEPAK) form a helical membrane-spanning segment. At 189–275 (ILFLNNALNH…VMMKPAMFLA (87 aa)) the chain is on the cytoplasmic side. Residues 276–295 (VIAGGLTGTFTFQTLGAGLT) traverse the membrane as a helical segment. Residues 296–317 (APASPGSIIAIMGMSPKGWGPH) are Extracellular-facing. A helical membrane pass occupies residues 318 to 339 (LVVLAGVFAAAVASFLVASIIL). Residues 340–589 (KSDNSDDDSL…YDKLVARMHK (250 aa)) are Cytoplasmic-facing. Positions 383–478 (HQIIFACDAG…SLTNGKASGS (96 aa)) constitute a PTS EIIB type-2 domain. C389 serves as the catalytic Phosphocysteine intermediate; for EIIB activity. A Phosphocysteine; by EIIA modification is found at C389.

As to quaternary structure, homodimer.

The protein resides in the cell membrane. The enzyme catalyses D-mannitol(out) + N(pros)-phospho-L-histidyl-[protein] = D-mannitol 1-phosphate(in) + L-histidyl-[protein]. The phosphoenolpyruvate-dependent sugar phosphotransferase system (sugar PTS), a major carbohydrate active transport system, catalyzes the phosphorylation of incoming sugar substrates concomitantly with their translocation across the cell membrane. The enzyme II CmtAB PTS system is involved in D-mannitol transport. This chain is PTS system mannitol-specific EIICB component, found in Streptococcus mutans serotype c (strain ATCC 700610 / UA159).